Reading from the N-terminus, the 244-residue chain is Phosphoadenosine 5'-phosphosulfate reductase (244 aa).

Residue Cys-239 is the Nucleophile; cysteine thiosulfonate intermediate of the active site.

It belongs to the PAPS reductase family. CysH subfamily.

Its subcellular location is the cytoplasm. The enzyme catalyses [thioredoxin]-disulfide + sulfite + adenosine 3',5'-bisphosphate + 2 H(+) = [thioredoxin]-dithiol + 3'-phosphoadenylyl sulfate. The protein operates within sulfur metabolism; hydrogen sulfide biosynthesis; sulfite from sulfate: step 3/3. Catalyzes the formation of sulfite from phosphoadenosine 5'-phosphosulfate (PAPS) using thioredoxin as an electron donor. In Pectobacterium carotovorum subsp. carotovorum (strain PC1), this protein is Phosphoadenosine 5'-phosphosulfate reductase.